The primary structure comprises 346 residues: Heat-inducible transcription repressor HrcA (346 aa).

The protein belongs to the HrcA family.

In terms of biological role, negative regulator of class I heat shock genes (grpE-dnaK-dnaJ and groELS operons). Prevents heat-shock induction of these operons. The chain is Heat-inducible transcription repressor HrcA from Pediococcus pentosaceus (strain ATCC 25745 / CCUG 21536 / LMG 10740 / 183-1w).